The chain runs to 242 residues: UPF0246 protein SPH_1662 (242 aa).

It belongs to the UPF0246 family.

The polypeptide is UPF0246 protein SPH_1662 (Streptococcus pneumoniae (strain Hungary19A-6)).